A 397-amino-acid chain; its full sequence is Na(+)/H(+) antiporter NhaA 3 (397 aa).

The next 11 membrane-spanning stretches (helical) occupy residues 18–38 (AGGI…NSPF), 63–83 (LLLW…GLEL), 98–118 (IALP…IYWW), 129–149 (GWAI…ALLG), 158–178 (IFLT…IAFF), 181–201 (SKIS…LFIC), 207–224 (TTLR…VALL), 269–289 (VAFL…FIGM), 306–326 (LFFG…LFGW), 340–360 (GVAV…SLAF), and 373–393 (LGIV…LRSA).

This sequence belongs to the NhaA Na(+)/H(+) (TC 2.A.33) antiporter family.

The protein localises to the cell inner membrane. The catalysed reaction is Na(+)(in) + 2 H(+)(out) = Na(+)(out) + 2 H(+)(in). Its function is as follows. Na(+)/H(+) antiporter that extrudes sodium in exchange for external protons. This is Na(+)/H(+) antiporter NhaA 3 from Saccharophagus degradans (strain 2-40 / ATCC 43961 / DSM 17024).